A 306-amino-acid polypeptide reads, in one-letter code: Porphobilinogen deaminase (306 aa).

Position 239 is an S-(dipyrrolylmethanemethyl)cysteine (Cys239).

This sequence belongs to the HMBS family. Monomer. Dipyrromethane is required as a cofactor.

The enzyme catalyses 4 porphobilinogen + H2O = hydroxymethylbilane + 4 NH4(+). It participates in porphyrin-containing compound metabolism; protoporphyrin-IX biosynthesis; coproporphyrinogen-III from 5-aminolevulinate: step 2/4. Functionally, tetrapolymerization of the monopyrrole PBG into the hydroxymethylbilane pre-uroporphyrinogen in several discrete steps. This Helicobacter acinonychis (strain Sheeba) protein is Porphobilinogen deaminase.